We begin with the raw amino-acid sequence, 188 residues long: Mitochondrial import inner membrane translocase subunit Tim23B (188 aa).

2 consecutive transmembrane segments (helical) span residues 73-93 (FELAFFTIGGCCMTGAAFGAM) and 125-145 (ALWANTLGSLALLYSAFGVII).

Belongs to the Tim17/Tim22/Tim23 family.

It localises to the mitochondrion inner membrane. In terms of biological role, may participate in the translocation of transit peptide-containing proteins across the mitochondrial inner membrane. the PAM complex. The polypeptide is Mitochondrial import inner membrane translocase subunit Tim23B (Homo sapiens (Human)).